The following is a 333-amino-acid chain: Gap junction alpha-4 protein (333 aa).

At 1-20 the chain is on the cytoplasmic side; that stretch reads MGDWGFLEKLLDQVQEHSTV. The helical transmembrane segment at 21–40 threads the bilayer; sequence VGKIWLTVLFIFRILILGLA. Topologically, residues 41–76 are extracellular; sequence GESVWGDEQSDFECNTAQPGCTNVCYDQAFPISHIR. A helical transmembrane segment spans residues 77 to 99; it reads YWVLQFLFVSTPTLVYLGHVIYL. The Cytoplasmic segment spans residues 100 to 148; the sequence is SRREERLRQKEGELRALPAKDPRVERALASIERQMAKISVAEDGHLRIR. Residues 149 to 165 form a helical membrane-spanning segment; it reads GALMGTYVASVLCKSVL. The Extracellular portion of the chain corresponds to 166–207; that stretch reads EAGFLYGQWRLYGWTMEPVFVCQRSPCPYLVDCFVSRPTEKT. Residues 208 to 230 form a helical membrane-spanning segment; that stretch reads IFIIFMLVVGLISLVLNLLELAY. The Cytoplasmic segment spans residues 231–333; sequence LLCRCLSRGV…SSSASKKQYV (103 aa). The segment at 303–333 is disordered; that stretch reads SRAPLFLDPPPQTGRKSPSRPSSSASKKQYV. The span at 317–333 shows a compositional bias: low complexity; it reads RKSPSRPSSSASKKQYV.

The protein belongs to the connexin family. Alpha-type (group II) subfamily. A connexon is composed of a hexamer of connexins.

The protein localises to the cell membrane. The protein resides in the cell junction. It is found in the gap junction. Functionally, one gap junction consists of a cluster of closely packed pairs of transmembrane channels, the connexons, through which materials of low MW diffuse from one cell to a neighboring cell. This chain is Gap junction alpha-4 protein (GJA4), found in Bos taurus (Bovine).